Here is a 198-residue protein sequence, read N- to C-terminus: Holliday junction branch migration complex subunit RuvA (198 aa).

Residues 1-64 (MYEYIKGEYM…EDFIGLYGFE (64 aa)) form a domain I region. Residues 65 to 143 (SLEELEMFKM…TDELLNCIDE (79 aa)) are domain II. A flexible linker region spans residues 144 to 154 (FDDVTQDNSLA). The interval 154–198 (AVSEALSALISLGYTEKEAEKVLRDVDKSESVENIIKSALVKLMG) is domain III.

It belongs to the RuvA family. In terms of assembly, homotetramer. Forms an RuvA(8)-RuvB(12)-Holliday junction (HJ) complex. HJ DNA is sandwiched between 2 RuvA tetramers; dsDNA enters through RuvA and exits via RuvB. An RuvB hexamer assembles on each DNA strand where it exits the tetramer. Each RuvB hexamer is contacted by two RuvA subunits (via domain III) on 2 adjacent RuvB subunits; this complex drives branch migration. In the full resolvosome a probable DNA-RuvA(4)-RuvB(12)-RuvC(2) complex forms which resolves the HJ.

Its subcellular location is the cytoplasm. In terms of biological role, the RuvA-RuvB-RuvC complex processes Holliday junction (HJ) DNA during genetic recombination and DNA repair, while the RuvA-RuvB complex plays an important role in the rescue of blocked DNA replication forks via replication fork reversal (RFR). RuvA specifically binds to HJ cruciform DNA, conferring on it an open structure. The RuvB hexamer acts as an ATP-dependent pump, pulling dsDNA into and through the RuvAB complex. HJ branch migration allows RuvC to scan DNA until it finds its consensus sequence, where it cleaves and resolves the cruciform DNA. The chain is Holliday junction branch migration complex subunit RuvA from Clostridium botulinum (strain Eklund 17B / Type B).